The following is a 153-amino-acid chain: NAD(P)H-quinone oxidoreductase subunit N (153 aa).

Belongs to the complex I NdhN subunit family. As to quaternary structure, NDH-1 can be composed of about 15 different subunits; different subcomplexes with different compositions have been identified which probably have different functions.

The protein localises to the cellular thylakoid membrane. It carries out the reaction a plastoquinone + NADH + (n+1) H(+)(in) = a plastoquinol + NAD(+) + n H(+)(out). The catalysed reaction is a plastoquinone + NADPH + (n+1) H(+)(in) = a plastoquinol + NADP(+) + n H(+)(out). Its function is as follows. NDH-1 shuttles electrons from an unknown electron donor, via FMN and iron-sulfur (Fe-S) centers, to quinones in the respiratory and/or the photosynthetic chain. The immediate electron acceptor for the enzyme in this species is believed to be plastoquinone. Couples the redox reaction to proton translocation, and thus conserves the redox energy in a proton gradient. Cyanobacterial NDH-1 also plays a role in inorganic carbon-concentration. This chain is NAD(P)H-quinone oxidoreductase subunit N, found in Prochlorococcus marinus (strain MIT 9303).